The following is a 132-amino-acid chain: DNA-directed RNA polymerase subunit omega (132 aa).

The protein belongs to the RNA polymerase subunit omega family. As to quaternary structure, the RNAP catalytic core consists of 2 alpha, 1 beta, 1 beta' and 1 omega subunit. When a sigma factor is associated with the core the holoenzyme is formed, which can initiate transcription.

The enzyme catalyses RNA(n) + a ribonucleoside 5'-triphosphate = RNA(n+1) + diphosphate. Its function is as follows. Promotes RNA polymerase assembly. Latches the N- and C-terminal regions of the beta' subunit thereby facilitating its interaction with the beta and alpha subunits. The protein is DNA-directed RNA polymerase subunit omega of Ehrlichia ruminantium (strain Welgevonden).